The chain runs to 412 residues: Multifunctional CCA protein (412 aa).

Positions 8 and 11 each coordinate ATP. Positions 8 and 11 each coordinate CTP. Residues Asp21 and Asp23 each coordinate Mg(2+). The ATP site is built by Arg91, Arg137, and Arg140. 3 residues coordinate CTP: Arg91, Arg137, and Arg140. An HD domain is found at Thr225 to Tyr326.

Belongs to the tRNA nucleotidyltransferase/poly(A) polymerase family. Bacterial CCA-adding enzyme type 1 subfamily. As to quaternary structure, monomer. Can also form homodimers and oligomers. The cofactor is Mg(2+). Ni(2+) is required as a cofactor.

It carries out the reaction a tRNA precursor + 2 CTP + ATP = a tRNA with a 3' CCA end + 3 diphosphate. It catalyses the reaction a tRNA with a 3' CCA end + 2 CTP + ATP = a tRNA with a 3' CCACCA end + 3 diphosphate. Its function is as follows. Catalyzes the addition and repair of the essential 3'-terminal CCA sequence in tRNAs without using a nucleic acid template. Adds these three nucleotides in the order of C, C, and A to the tRNA nucleotide-73, using CTP and ATP as substrates and producing inorganic pyrophosphate. tRNA 3'-terminal CCA addition is required both for tRNA processing and repair. Also involved in tRNA surveillance by mediating tandem CCA addition to generate a CCACCA at the 3' terminus of unstable tRNAs. While stable tRNAs receive only 3'-terminal CCA, unstable tRNAs are marked with CCACCA and rapidly degraded. The polypeptide is Multifunctional CCA protein (Nitrosomonas eutropha (strain DSM 101675 / C91 / Nm57)).